Reading from the N-terminus, the 295-residue chain is GTP cyclohydrolase FolE2 (295 aa).

The protein belongs to the GTP cyclohydrolase IV family.

The enzyme catalyses GTP + H2O = 7,8-dihydroneopterin 3'-triphosphate + formate + H(+). Its pathway is cofactor biosynthesis; 7,8-dihydroneopterin triphosphate biosynthesis; 7,8-dihydroneopterin triphosphate from GTP: step 1/1. Its function is as follows. Converts GTP to 7,8-dihydroneopterin triphosphate. This chain is GTP cyclohydrolase FolE2, found in Pseudomonas putida (strain W619).